A 474-amino-acid polypeptide reads, in one-letter code: Glutamine synthetase (474 aa).

One can recognise a GS beta-grasp domain in the interval 15-99; sequence EDVQFIDVRF…MTFFIHDPIT (85 aa). The GS catalytic domain maps to 107-474; it reads PRNIAKKAET…PYEFTLYYDI (368 aa). Mg(2+) is bound by residues E132 and E134. Residue E210 coordinates ATP. 2 residues coordinate Mg(2+): E215 and E223. L-glutamate-binding positions include 267-268 and G268; that span reads NG. Residue H272 coordinates Mg(2+). ATP contacts are provided by residues 274–276 and S276; that span reads HSS. L-glutamate-binding residues include R325, E331, and R343. Positions 343, 348, and 357 each coordinate ATP. Residue E362 participates in Mg(2+) binding. R364 serves as a coordination point for L-glutamate. Y402 carries the O-AMP-tyrosine modification.

This sequence belongs to the glutamine synthetase family. As to quaternary structure, oligomer of 12 subunits arranged in the form of two hexagons. Mg(2+) serves as cofactor.

It localises to the cytoplasm. It catalyses the reaction L-glutamate + NH4(+) + ATP = L-glutamine + ADP + phosphate + H(+). The activity of this enzyme could be controlled by adenylation under conditions of abundant glutamine. Its function is as follows. Catalyzes the ATP-dependent biosynthesis of glutamine from glutamate and ammonia. The polypeptide is Glutamine synthetase (Frankia alni).